The sequence spans 927 residues: MVTAPLLGWVAVRPIPRLSKLNTCKYVSSSLQSYKRSVGSCLGKQQSRDFSYSATLTDAGINLEKTRNIGIIAHIDAGKTTTTERMLYYSGFTRRIGDVDDGSTVTDFLPAERARGITIQSAAITFHWPPLAADGTSSGPSLEELESQNLPRSRASHTVNLIDTPGHADFTFEVLRSLRILDGAVCILDGVAGVEAQTEKVWHQASVYQIPRVVYVNKLDRDGAAFGRTVREVGSRLQGWPAVCQIPWFEGGNGRFTGIADVISLQGLLWKEGGDGKSVKVFDLAGLENEDKRLAEELKHARVALVELLSEHDEDMVESFFEHEDHLKVPPMTILKSLRKCLLGPEAQKIIPVFAGSSFRNMGVQPLLDAVNNLLPGPSESVDPEISLGNSKGSLGNLLSGELTLQQEPKTANIAKPKQKKKTAVAPTSVDTKHLAANLESCALAFKVVSDAKRGVLVYVRVYSGTLNKGCQLYNTNLHVTERAPRLFKMYANDAVEVDSIPAGHIGVVSGLKYARTGDTLISCTGSKMTPPEPLNTLQLRPIDVPPPVFFASIEPHSLSEEKNMQEALALLLREDPSLHVTVDEDSGQTLLSGMGELHLEIARDRLVNDFKAKATMGRIEIGYRECVLGQSNPVTKIFDREVAGRKGKAGCTAVVEPYDPESGEPSSGGEDIIFAEIVEGNRIIISAPGINISTDKRGKEESSSLPSQFDVNSFRTSLYNGALSALARGPQFAFPMHNTKVTLTCNVVEHLFGSDSSASALSAAARLATQGALRDLATGQNSGTGIMEPVMNVIISIDEASLGAVVHDISSARGGHIISLDEEMPISTSIGGNDSPESEQVVIDVNKIYAPPDPFETPSVAGGLPIQASANQTRTITAKVPLKEMVGYLKHLRSLSAGRGTFVMHVDRFERMSAQRQKAVLAELHR.

The transit peptide at 1-57 directs the protein to the mitochondrion; sequence MVTAPLLGWVAVRPIPRLSKLNTCKYVSSSLQSYKRSVGSCLGKQQSRDFSYSATLT. Residues 64 to 379 enclose the tr-type G domain; it reads EKTRNIGIIA…AVNNLLPGPS (316 aa). GTP-binding positions include 73–80, 163–167, and 217–220; these read AHIDAGKT, DTPGH, and NKLD.

The protein belongs to the TRAFAC class translation factor GTPase superfamily. Classic translation factor GTPase family. EF-G/EF-2 subfamily.

Its subcellular location is the mitochondrion. Its function is as follows. Mitochondrial GTPase that mediates the disassembly of ribosomes from messenger RNA at the termination of mitochondrial protein biosynthesis. Not involved in the GTP-dependent ribosomal translocation step during translation elongation. The protein is Ribosome-releasing factor 2, mitochondrial (mef2) of Talaromyces marneffei (strain ATCC 18224 / CBS 334.59 / QM 7333) (Penicillium marneffei).